Consider the following 70-residue polypeptide: Large ribosomal subunit protein bL31 (70 aa).

Residues Cys16, Cys18, Cys37, and Cys40 each coordinate Zn(2+).

This sequence belongs to the bacterial ribosomal protein bL31 family. Type A subfamily. In terms of assembly, part of the 50S ribosomal subunit. Zn(2+) is required as a cofactor.

Its function is as follows. Binds the 23S rRNA. The chain is Large ribosomal subunit protein bL31 from Shewanella woodyi (strain ATCC 51908 / MS32).